Here is a 542-residue protein sequence, read N- to C-terminus: Chaperonin GroEL (542 aa).

ATP is bound by residues 29-32, K50, 86-90, G415, and D495; these read TLGP and DGTTT.

This sequence belongs to the chaperonin (HSP60) family. Forms a cylinder of 14 subunits composed of two heptameric rings stacked back-to-back. Interacts with the co-chaperonin GroES.

It is found in the cytoplasm. It carries out the reaction ATP + H2O + a folded polypeptide = ADP + phosphate + an unfolded polypeptide.. In terms of biological role, together with its co-chaperonin GroES, plays an essential role in assisting protein folding. The GroEL-GroES system forms a nano-cage that allows encapsulation of the non-native substrate proteins and provides a physical environment optimized to promote and accelerate protein folding. This Azobacteroides pseudotrichonymphae genomovar. CFP2 protein is Chaperonin GroEL.